Here is a 135-residue protein sequence, read N- to C-terminus: Protein NrdI (135 aa).

Belongs to the NrdI family.

Probably involved in ribonucleotide reductase function. The polypeptide is Protein NrdI (Salmonella gallinarum (strain 287/91 / NCTC 13346)).